The following is a 486-amino-acid chain: Cardiolipin synthase A (486 aa).

A run of 2 helical transmembrane segments spans residues 3–23 (TFYT…IAGV) and 38–58 (MAWL…YLSF). PLD phosphodiesterase domains follow at residues 219 to 246 (MDLR…VDPR) and 399 to 426 (EGGL…DMRS). Catalysis depends on residues histidine 224, lysine 226, aspartate 231, histidine 404, lysine 406, and aspartate 411.

This sequence belongs to the phospholipase D family. Cardiolipin synthase subfamily. ClsA sub-subfamily.

It localises to the cell inner membrane. The enzyme catalyses 2 a 1,2-diacyl-sn-glycero-3-phospho-(1'-sn-glycerol) = a cardiolipin + glycerol. Functionally, catalyzes the reversible phosphatidyl group transfer from one phosphatidylglycerol molecule to another to form cardiolipin (CL) (diphosphatidylglycerol) and glycerol. The polypeptide is Cardiolipin synthase A (Klebsiella pneumoniae (strain 342)).